The chain runs to 227 residues: Biosynthetic peptidoglycan transglycosylase (227 aa).

Residues 7 to 27 form a helical membrane-spanning segment; it reads VALLTLLLLVAAPYVLTLVYG.

It belongs to the glycosyltransferase 51 family.

Its subcellular location is the cell inner membrane. The catalysed reaction is [GlcNAc-(1-&gt;4)-Mur2Ac(oyl-L-Ala-gamma-D-Glu-L-Lys-D-Ala-D-Ala)](n)-di-trans,octa-cis-undecaprenyl diphosphate + beta-D-GlcNAc-(1-&gt;4)-Mur2Ac(oyl-L-Ala-gamma-D-Glu-L-Lys-D-Ala-D-Ala)-di-trans,octa-cis-undecaprenyl diphosphate = [GlcNAc-(1-&gt;4)-Mur2Ac(oyl-L-Ala-gamma-D-Glu-L-Lys-D-Ala-D-Ala)](n+1)-di-trans,octa-cis-undecaprenyl diphosphate + di-trans,octa-cis-undecaprenyl diphosphate + H(+). Its pathway is cell wall biogenesis; peptidoglycan biosynthesis. In terms of biological role, peptidoglycan polymerase that catalyzes glycan chain elongation from lipid-linked precursors. In Rhodopseudomonas palustris (strain HaA2), this protein is Biosynthetic peptidoglycan transglycosylase.